Consider the following 2148-residue polypeptide: Polyketide synthase 1 (2148 aa).

The tract at residues 19–261 (FIFGDQSSCN…TPLAVHAPYH (243 aa)) is N-terminal acylcarrier protein transacylase domain (SAT). The Ketosynthase family 3 (KS3) domain occupies 394 to 829 (ESKIAIIGMS…GGNTALLVED (436 aa)). Residues Cys-566, His-701, and His-745 each act as for beta-ketoacyl synthase activity in the active site. Positions 929-1233 (AFVFSGQGSQ…PSLMRNKDGW (305 aa)) are malonyl-CoA:ACP transacylase (MAT) domain. Ser-1018 serves as the catalytic For acyl/malonyl transferase activity. The product template (PT) domain stretch occupies residues 1310 to 1624 (TASVHRIVHE…RKVLNTAMPP (315 aa)). The tract at residues 1314 to 1447 (HRIVHESVDK…SSLHFEQPKV (134 aa)) is N-terminal hotdog fold. Positions 1314 to 1619 (HRIVHESVDK…FQGIPRKVLN (306 aa)) constitute a PKS/mFAS DH domain. Catalysis depends on His-1346, which acts as the Proton acceptor; for dehydratase activity. The tract at residues 1474–1619 (LNSRMSSGVI…FQGIPRKVLN (146 aa)) is C-terminal hotdog fold. Asp-1533 (proton donor; for dehydratase activity) is an active-site residue. Positions 1619–1657 (NTAMPPPKSQNEAPVRSAPAKPAAKPPKSASSEHSGHFA) are disordered. The segment covering 1635-1650 (SAPAKPAAKPPKSASS) has biased composition (low complexity). The 75-residue stretch at 1678–1752 (RNPMLAVFKI…DLATHLGLDT (75 aa)) folds into the Carrier 1 domain. At Ser-1712 the chain carries O-(pantetheine 4'-phosphoryl)serine. Low complexity predominate over residues 1755-1790 (SDQSSGQSSSSGGLSPRSDSIGEITSSATTPPSLSP). The disordered stretch occupies residues 1755–1796 (SDQSSGQSSSSGGLSPRSDSIGEITSSATTPPSLSPRGSVSG). The region spanning 1793-1870 (SVSGSQCKDV…SFKHMFQQGH (78 aa)) is the Carrier 2 domain. Ser-1830 is modified (O-(pantetheine 4'-phosphoryl)serine). Residues 1882–2146 (LKQYRATSTL…ERVAAFIRST (265 aa)) form a thioesterase (TE) domain region. Ser-1973 (for thioesterase activity) is an active-site residue.

Functionally, polyketide synthase; part of the Pks1 gene cluster that mediates the biosynthesis of an anthraquinone derivative pigment that contributes to conidial pigmentation that provides protection from UV radiation, heat and cold stress. The polyketide synthase Pks1 produces 1-acetyl-2,4,6,8-tetrahydroxy-9,10-anthraquinone though condensation of acetyl-CoA with malonyl-CoA. The dehydratase EthD and the laccase Mlac1 further convert the anthraquinone derivative into the final conidial pigment. This Metarhizium guizhouense (strain ARSEF 977) protein is Polyketide synthase 1.